Here is a 329-residue protein sequence, read N- to C-terminus: Ketol-acid reductoisomerase (NADP(+)) (329 aa).

The KARI N-terminal Rossmann domain occupies 2 to 182 (TQLFYDTDAD…GGTRAGILET (181 aa)). NADP(+) contacts are provided by residues 25-28 (YGSQ), serine 51, serine 53, and 83-86 (DEFQ). Residue histidine 108 is part of the active site. Position 134 (glycine 134) interacts with NADP(+). The region spanning 183 to 328 (NFKEETETDL…KSLRSMFSWL (146 aa)) is the KARI C-terminal knotted domain. The Mg(2+) site is built by aspartate 191, glutamate 195, glutamate 227, and glutamate 231. Serine 252 serves as a coordination point for substrate.

This sequence belongs to the ketol-acid reductoisomerase family. It depends on Mg(2+) as a cofactor.

The enzyme catalyses (2R)-2,3-dihydroxy-3-methylbutanoate + NADP(+) = (2S)-2-acetolactate + NADPH + H(+). It catalyses the reaction (2R,3R)-2,3-dihydroxy-3-methylpentanoate + NADP(+) = (S)-2-ethyl-2-hydroxy-3-oxobutanoate + NADPH + H(+). Its pathway is amino-acid biosynthesis; L-isoleucine biosynthesis; L-isoleucine from 2-oxobutanoate: step 2/4. It functions in the pathway amino-acid biosynthesis; L-valine biosynthesis; L-valine from pyruvate: step 2/4. Its function is as follows. Involved in the biosynthesis of branched-chain amino acids (BCAA). Catalyzes an alkyl-migration followed by a ketol-acid reduction of (S)-2-acetolactate (S2AL) to yield (R)-2,3-dihydroxy-isovalerate. In the isomerase reaction, S2AL is rearranged via a Mg-dependent methyl migration to produce 3-hydroxy-3-methyl-2-ketobutyrate (HMKB). In the reductase reaction, this 2-ketoacid undergoes a metal-dependent reduction by NADPH to yield (R)-2,3-dihydroxy-isovalerate. This chain is Ketol-acid reductoisomerase (NADP(+)), found in Prochlorococcus marinus (strain MIT 9301).